The chain runs to 782 residues: E3 ubiquitin-protein ligase SopA (782 aa).

Residues 137–171 form a disordered region; that stretch reads VSVSANNRPTVSEGRTPPVSPSLSLQATSSPSSPA. A compositionally biased stretch (low complexity) spans 157-171; that stretch reads PSLSLQATSSPSSPA. C753 serves as the catalytic Glycyl thioester intermediate.

Belongs to the SopA E3 ligase family. Ubiquitinated in the presence of host E1 ubiquitin-activating enzyme, E2 ubiquitin-conjugating enzyme and ubiquitin.

The protein resides in the secreted. Its subcellular location is the host cell. It carries out the reaction S-ubiquitinyl-[E2 ubiquitin-conjugating enzyme]-L-cysteine + [acceptor protein]-L-lysine = [E2 ubiquitin-conjugating enzyme]-L-cysteine + N(6)-ubiquitinyl-[acceptor protein]-L-lysine.. Functionally, effector proteins function to alter host cell physiology and promote bacterial survival in host tissues. This protein is an E3 ubiquitin ligase that interferes with host's ubiquitination pathway. This Salmonella dublin (strain CT_02021853) protein is E3 ubiquitin-protein ligase SopA (sopA).